The primary structure comprises 175 residues: Protein FLOWERING LOCUS T (175 aa).

Belongs to the phosphatidylethanolamine-binding protein family. Interacts with FD/BZIP14 and FDP/BZIP27. Interacts with FTIP1/MCTP1 in phloem companion cells. Interacts with NAKR1. In terms of tissue distribution, mostly localized in leaves vasculature.

The protein localises to the cytoplasm. The protein resides in the nucleus. It localises to the endoplasmic reticulum. Its function is as follows. Component of the mobile flower-promoting signal (floral stimulus or florigen). Promotes the transition from vegetative growth to flowering. Required for 'SEPALLATA3' (SEP3) and 'FRUITFULL' (FUL) accumulation in mature rosette leaves. Seems to acts in parallel with 'LEAFY' to induce flowering by regulating 'APETALA1'. Translated in leaves and then transported to the shoot apical meristem where it activates the transcription of several floral meristem identity genes. May play a role in both the autonomous and the long-day flowering pathways. This Arabidopsis thaliana (Mouse-ear cress) protein is Protein FLOWERING LOCUS T.